A 283-amino-acid chain; its full sequence is Pantothenate synthetase 2 (283 aa).

34–41 (MGALHDGH) contacts ATP. His41 acts as the Proton donor in catalysis. Residue Gln65 coordinates (R)-pantoate. Gln65 lines the beta-alanine pocket. 152 to 155 (GEKD) lines the ATP pocket. Residue Gln158 participates in (R)-pantoate binding. ATP is bound by residues Val181 and 189 to 192 (MSSR).

It belongs to the pantothenate synthetase family. As to quaternary structure, homodimer.

It localises to the cytoplasm. The catalysed reaction is (R)-pantoate + beta-alanine + ATP = (R)-pantothenate + AMP + diphosphate + H(+). It functions in the pathway cofactor biosynthesis; (R)-pantothenate biosynthesis; (R)-pantothenate from (R)-pantoate and beta-alanine: step 1/1. In terms of biological role, catalyzes the condensation of pantoate with beta-alanine in an ATP-dependent reaction via a pantoyl-adenylate intermediate. In Bradyrhizobium diazoefficiens (strain JCM 10833 / BCRC 13528 / IAM 13628 / NBRC 14792 / USDA 110), this protein is Pantothenate synthetase 2.